The chain runs to 143 residues: Interleukin-4 (143 aa).

Residues 1–19 (MGLSPQLAAVLLCLLVCTG) form the signal peptide. Intrachain disulfides connect Cys-48/Cys-88 and Cys-70/Cys-115. Residues Asn-62 and Asn-91 are each glycosylated (N-linked (GlcNAc...) asparagine).

It belongs to the IL-4/IL-13 family.

It is found in the secreted. In terms of biological role, participates in at least several B-cell activation processes as well as of other cell types. It is a costimulator of DNA-synthesis. It induces the expression of class II MHC molecules on resting B-cells. It enhances both secretion and cell surface expression of IgE and IgG1. It also regulates the expression of the low affinity Fc receptor for IgE (CD23) on both lymphocytes and monocytes. Positively regulates IL31RA expression in macrophages. Stimulates autophagy in dendritic cells by interfering with mTORC1 signaling and through the induction of RUFY4. The sequence is that of Interleukin-4 (IL4) from Meriones unguiculatus (Mongolian jird).